We begin with the raw amino-acid sequence, 232 residues long: Ashwin (232 aa).

Basic and acidic residues-rich tracts occupy residues 64-97 (DLPK…DGLR) and 116-127 (KKTENGDNDRLR). The disordered stretch occupies residues 64–232 (DLPKSRWGKM…KRKIQHVTWP (169 aa)). Positions 130-140 (PQASATSNTFR) are enriched in polar residues. Ser143 bears the Phosphoserine mark. Positions 144 to 156 (DSSSSVSPLVLSS) are enriched in low complexity. A compositionally biased stretch (basic and acidic residues) spans 163-179 (KMEHGNNDNKQNHDLTH). Residues Ser182, Ser189, and Ser193 each carry the phosphoserine modification. At Thr198 the chain carries Phosphothreonine.

This sequence belongs to the ashwin family. Component of the tRNA-splicing ligase complex.

The protein localises to the nucleus. This is Ashwin from Bos taurus (Bovine).